Reading from the N-terminus, the 348-residue chain is uncharacterized protein (348 aa).

The first 26 residues, 1-26 (MKKRIILLLAVIIAAAAAGVAFYVAK), serve as a signal peptide directing secretion.

This is an uncharacterized protein from Bacillus subtilis (strain 168).